The sequence spans 572 residues: DnaJ protein ERDJ3A (572 aa).

Positions 1–23 are cleaved as a signal peptide; that stretch reads MVRTRLAISVVLVSTLLLLNVKA. In terms of domain architecture, J spans 27 to 91; sequence DPYKVLGVSK…EKRKNYDLYG (65 aa). Residues 394-423 are a coiled coil; sequence ITVKNLKSAVQELGKLLEGLEKKNKKVSSK. The tract at residues 419 to 439 is disordered; that stretch reads KVSSKSQAGQAPNESSEKIPL. The segment covering 422–432 has biased composition (polar residues); sequence SKSQAGQAPNE. Asn431 carries an N-linked (GlcNAc...) asparagine glycan.

In terms of assembly, interacts with BIP1 and BIP3. The interaction with BIP1 and BIP3 activates the ATPase enzyme activities of BIP1 and BIP3. In terms of processing, not N-glycosylated. In terms of tissue distribution, expressed in roots, leaves, stems, flowers, mature pollen grains and growing pollen tubes.

It localises to the endoplasmic reticulum lumen. Regulates protein folding in the endoplasmic reticulum (ER) lumen. Functions probably as a co-molecular chaperone that is required for normal growth of pollen tubes under high-temperature stress. This is DnaJ protein ERDJ3A (ERDJ3A) from Arabidopsis thaliana (Mouse-ear cress).